Consider the following 1191-residue polypeptide: Solute carrier family 12 member 2 (1191 aa).

The disordered stretch occupies residues 1–166 (MEPAFPASSA…MSEGSLHSSG (166 aa)). Topologically, residues 1 to 258 (MEPAFPASSA…ADNKGVVKFG (258 aa)) are cytoplasmic. 4 stretches are compositionally biased toward low complexity: residues 13 to 25 (QSQSGPEPGAGQQ), 59 to 69 (KGQTAAQPAAA), 80 to 99 (AAAPSPASPAAAAEPPAAAA), and 131 to 141 (SASSAHGGHQP). A compositionally biased stretch (polar residues) spans 142 to 155 (PSESMNGYPQNGDT). A phosphothreonine; by OXSR1 and STK39 mark is found at threonine 175, threonine 179, and threonine 184. Phosphothreonine is present on residues threonine 189 and threonine 202. Residues 259–288 (WIKGVLVRCMLNIWGVMLFIRLSWIVGHAG) traverse the membrane as a discontinuously helical segment. Residue leucine 269 coordinates Na(+). K(+) is bound by residues asparagine 270 and isoleucine 271. Residue tryptophan 272 participates in Na(+) binding. Chloride is bound by residues glycine 273, valine 274, and methionine 275. A helical transmembrane segment spans residues 289-308 (IGLALLVIGTATVVTTITGL). Residues 309–339 (STSAITTNGFVRGGGAYYLISRSLGPEFGGA) are Cytoplasmic-facing. A helical membrane pass occupies residues 340-367 (IGLIFAFANAVAVAMYVVGFAETVRDLL). Position 344 (phenylalanine 344) interacts with chloride. K(+) is bound at residue tyrosine 355. The Extracellular portion of the chain corresponds to 368 to 377 (VEHNALMIDE). The chain crosses the membrane as a helical span at residues 378–401 (MSDIRIIGSVTIVVLFGISVAGME). Residues 402–404 (WEA) are Cytoplasmic-facing. A helical transmembrane segment spans residues 405-426 (KAQIVLLGILLLAIVNFTVGTF). At 427-458 (IPANDKRAKGFFNYRGEIFSENFVPDFRDGED) the chain is on the extracellular side. Residues 459-476 (FFSVFAIFFPAATGILAG) traverse the membrane as a discontinuously helical segment. K(+) is bound by residues proline 468, alanine 469, and threonine 471. Positions 468 and 469 each coordinate chloride. Chloride contacts are provided by glycine 472 and isoleucine 473. The Cytoplasmic portion of the chain corresponds to 477-491 (ANISGDLADPQLAIP). Residues 492–513 (KGTLLAILITTIVYAGAAVSVG) traverse the membrane as a helical segment. Residues 514-571 (SCIVREATGNLTDAIIPGTVTNCTNVACKLGFNFSSCATNKCSYGLMNDFQVMSLVSG) are Extracellular-facing. 2 N-linked (GlcNAc...) asparagine glycosylation sites follow: asparagine 523 and asparagine 535. Cysteine 536 and cysteine 541 are disulfide-bonded. N-linked (GlcNAc...) asparagine glycosylation occurs at asparagine 546. A disulfide bond links cysteine 550 and cysteine 555. A helical membrane pass occupies residues 572–596 (FGPLITAGIFSATLSSALASLVSAP). Na(+) contacts are provided by alanine 583, serine 586, and serine 587. Residues 597-624 (KIFQALCKDNIYPGLHVFSVGYGKNNEP) are Cytoplasmic-facing. Helical transmembrane passes span 625 to 645 (LRGYVLTFFIGLGFILIAELN) and 646 to 664 (VIAPIISNFFLASYALINF). Phenylalanine 655 and tyrosine 659 together coordinate chloride. Residues 665 to 687 (SVFHASLAKSPGWRPAFRFYNMW) are Cytoplasmic-facing. 2 helical membrane passes run 688–705 (ISLIGAILCCGVMFVINW) and 706–718 (WAALLTNVIVLAL). Over 719–1191 (YIYVTYKKPD…NHQSVLTFYS (473 aa)) the chain is Cytoplasmic. Residues 734 to 751 (STQALTYLNALQHAIRLT) are scissor helix. Positions 929–972 (HSDADSSKPSSKSVSETNSPAVCQDQKDEEDDGKASTQPLLKKE) are disordered. Residues 935–948 (SKPSSKSVSETNSP) show a composition bias toward low complexity. Threonine 1114 bears the Phosphothreonine mark.

This sequence belongs to the SLC12A transporter family. Homodimer. Post-translationally, phosphorylated at Thr-175, Thr-179 and Thr-184 by OXSR1/OSR1 and STK39/SPAK downstream of WNK kinases (WNK1, WNK2, WNK3 or WNK4), promoting its activity. In terms of tissue distribution, strongly expressed in rectal gland, brain, gill and intestine. Also detected at lower levels in heart, kidney, and testis.

The protein localises to the basolateral cell membrane. The catalysed reaction is K(+)(out) + 2 chloride(out) + Na(+)(out) = K(+)(in) + 2 chloride(in) + Na(+)(in). With respect to regulation, activated following phosphorylation by OXSR1/OSR1 and STK39/SPAK. Inhibited by bumetanide. Functionally, cation-chloride cotransporter which mediates the electroneutral transport of chloride, potassium and/or sodium ions across the membrane. Plays a vital role in the regulation of ionic balance and cell volume. This is Solute carrier family 12 member 2 (SLC12A2) from Squalus acanthias (Spiny dogfish).